The primary structure comprises 459 residues: Protoheme IX farnesyltransferase (459 aa).

The segment at 1-184 (MSRNTATQFV…AYVQLMKPRL (184 aa)) is unknown. 12 helical membrane passes run 9–29 (FVAV…LGAT), 66–86 (AAAL…RTGA), 93–113 (AVTL…YTAM), 123–143 (VHLT…AWTL), 184–204 (LMWL…SQLG), 211–231 (AATV…SGTF), 262–282 (LAFG…VNLL), 284–304 (AVLG…VLKP), 325–345 (WVAV…VIFL), 382–402 (HIVY…ELTG), 403–423 (LGPL…YFAI), and 438–458 (FHAS…DTMV). The segment at 185-459 (MWLLCLVAGA…VAVVLDTMVV (275 aa)) is protoheme IX prenyltransferase.

In the C-terminal section; belongs to the UbiA prenyltransferase family. Protoheme IX farnesyltransferase subfamily.

It localises to the cell membrane. The enzyme catalyses heme b + (2E,6E)-farnesyl diphosphate + H2O = Fe(II)-heme o + diphosphate. The protein operates within porphyrin-containing compound metabolism; heme O biosynthesis; heme O from protoheme: step 1/1. In terms of biological role, converts heme B (protoheme IX) to heme O by substitution of the vinyl group on carbon 2 of heme B porphyrin ring with a hydroxyethyl farnesyl side group. The polypeptide is Protoheme IX farnesyltransferase (ctaB) (Halobacterium salinarum (strain ATCC 29341 / DSM 671 / R1)).